An 802-amino-acid chain; its full sequence is Copper-exporting P-type ATPase (802 aa).

2 consecutive HMA domains span residues 5-70 (KKTT…YGVA) and 72-138 (ETVE…YDAS). Cu(+)-binding residues include Cys-16, Cys-19, Cys-83, and Cys-86. The next 6 membrane-spanning stretches (helical) occupy residues 161–181 (LIIS…HLFN), 192–212 (WFQF…FYVG), 224–244 (MDVL…YEMI), 256–276 (LYFE…YLEA), 411–431 (YFVP…ITLV), and 438–458 (PALV…LGLA). The 4-aspartylphosphate intermediate role is filled by Asp-495. Mg(2+)-binding residues include Asp-690 and Asp-694. The next 2 helical transmembrane spans lie at 748-767 (LFWA…LGLL) and 771-790 (VAGA…ALRL).

This sequence belongs to the cation transport ATPase (P-type) (TC 3.A.3) family. Type IB subfamily.

The protein localises to the cell membrane. It carries out the reaction Cu(+)(in) + ATP + H2O = Cu(+)(out) + ADP + phosphate + H(+). In terms of biological role, involved in copper export. In Staphylococcus aureus (strain bovine RF122 / ET3-1), this protein is Copper-exporting P-type ATPase (copA).